We begin with the raw amino-acid sequence, 183 residues long: Acireductone dioxygenase (183 aa).

Positions 99, 101, 105, and 144 each coordinate Fe(2+). His99, His101, Glu105, and His144 together coordinate Ni(2+).

It belongs to the acireductone dioxygenase (ARD) family. In terms of assembly, monomer. Requires Fe(2+) as cofactor. It depends on Ni(2+) as a cofactor.

It catalyses the reaction 1,2-dihydroxy-5-(methylsulfanyl)pent-1-en-3-one + O2 = 3-(methylsulfanyl)propanoate + CO + formate + 2 H(+). The enzyme catalyses 1,2-dihydroxy-5-(methylsulfanyl)pent-1-en-3-one + O2 = 4-methylsulfanyl-2-oxobutanoate + formate + 2 H(+). The protein operates within amino-acid biosynthesis; L-methionine biosynthesis via salvage pathway; L-methionine from S-methyl-5-thio-alpha-D-ribose 1-phosphate: step 5/6. Its function is as follows. Catalyzes 2 different reactions between oxygen and the acireductone 1,2-dihydroxy-3-keto-5-methylthiopentene (DHK-MTPene) depending upon the metal bound in the active site. Fe-containing acireductone dioxygenase (Fe-ARD) produces formate and 2-keto-4-methylthiobutyrate (KMTB), the alpha-ketoacid precursor of methionine in the methionine recycle pathway. Ni-containing acireductone dioxygenase (Ni-ARD) produces methylthiopropionate, carbon monoxide and formate, and does not lie on the methionine recycle pathway. The protein is Acireductone dioxygenase of Microcystis aeruginosa (strain NIES-843 / IAM M-2473).